Reading from the N-terminus, the 419-residue chain is Serine--tRNA ligase (419 aa).

226-228 is a binding site for L-serine; that stretch reads TSE. ATP-binding positions include 257-259 and Val-273; that span reads RRE. Residue Glu-280 participates in L-serine binding. An ATP-binding site is contributed by 344–347; that stretch reads ELTS. Thr-379 contacts L-serine.

Belongs to the class-II aminoacyl-tRNA synthetase family. Type-1 seryl-tRNA synthetase subfamily. Homodimer. The tRNA molecule binds across the dimer.

The protein localises to the cytoplasm. It carries out the reaction tRNA(Ser) + L-serine + ATP = L-seryl-tRNA(Ser) + AMP + diphosphate + H(+). It catalyses the reaction tRNA(Sec) + L-serine + ATP = L-seryl-tRNA(Sec) + AMP + diphosphate + H(+). It functions in the pathway aminoacyl-tRNA biosynthesis; selenocysteinyl-tRNA(Sec) biosynthesis; L-seryl-tRNA(Sec) from L-serine and tRNA(Sec): step 1/1. In terms of biological role, catalyzes the attachment of serine to tRNA(Ser). Is also able to aminoacylate tRNA(Sec) with serine, to form the misacylated tRNA L-seryl-tRNA(Sec), which will be further converted into selenocysteinyl-tRNA(Sec). This chain is Serine--tRNA ligase, found in Corynebacterium efficiens (strain DSM 44549 / YS-314 / AJ 12310 / JCM 11189 / NBRC 100395).